The following is a 155-amino-acid chain: Xanthine-guanine phosphoribosyltransferase (155 aa).

Residues 37–38 (RG) and 91–99 (DDLVDTGNT) each bind 5-phospho-alpha-D-ribose 1-diphosphate. D92 serves as a coordination point for Mg(2+). Positions 95 and 138 each coordinate guanine. The xanthine site is built by D95 and I138. GMP contacts are provided by residues 95–99 (DTGNT) and 137–138 (WI).

The protein belongs to the purine/pyrimidine phosphoribosyltransferase family. XGPT subfamily. In terms of assembly, homotetramer. The cofactor is Mg(2+).

The protein resides in the cell inner membrane. It carries out the reaction GMP + diphosphate = guanine + 5-phospho-alpha-D-ribose 1-diphosphate. The enzyme catalyses XMP + diphosphate = xanthine + 5-phospho-alpha-D-ribose 1-diphosphate. The catalysed reaction is IMP + diphosphate = hypoxanthine + 5-phospho-alpha-D-ribose 1-diphosphate. Its pathway is purine metabolism; GMP biosynthesis via salvage pathway; GMP from guanine: step 1/1. The protein operates within purine metabolism; XMP biosynthesis via salvage pathway; XMP from xanthine: step 1/1. Its function is as follows. Acts on guanine, xanthine and to a lesser extent hypoxanthine. In terms of biological role, purine salvage pathway enzyme that catalyzes the transfer of the ribosyl-5-phosphate group from 5-phospho-alpha-D-ribose 1-diphosphate (PRPP) to the N9 position of the 6-oxopurines guanine and xanthine to form the corresponding ribonucleotides GMP (guanosine 5'-monophosphate) and XMP (xanthosine 5'-monophosphate), with the release of PPi. To a lesser extent, also acts on hypoxanthine. The sequence is that of Xanthine-guanine phosphoribosyltransferase from Haemophilus influenzae (strain ATCC 51907 / DSM 11121 / KW20 / Rd).